A 1174-amino-acid chain; its full sequence is DNA-directed RNA polymerase subunit beta' (1174 aa).

Zn(2+) is bound by residues C60, C62, C75, and C78. Mg(2+) is bound by residues D450, D452, and D454. 4 residues coordinate Zn(2+): C795, C869, C876, and C879.

This sequence belongs to the RNA polymerase beta' chain family. In terms of assembly, the RNAP catalytic core consists of 2 alpha, 1 beta, 1 beta' and 1 omega subunit. When a sigma factor is associated with the core the holoenzyme is formed, which can initiate transcription. It depends on Mg(2+) as a cofactor. Zn(2+) serves as cofactor.

It carries out the reaction RNA(n) + a ribonucleoside 5'-triphosphate = RNA(n+1) + diphosphate. In terms of biological role, DNA-dependent RNA polymerase catalyzes the transcription of DNA into RNA using the four ribonucleoside triphosphates as substrates. The polypeptide is DNA-directed RNA polymerase subunit beta' (Clostridium kluyveri (strain ATCC 8527 / DSM 555 / NBRC 12016 / NCIMB 10680 / K1)).